The following is a 144-amino-acid chain: Cell division protein SepF (144 aa).

The segment covering 14-31 (EDDEMNEVPYTESEEQQE) has biased composition (acidic residues). Residues 14 to 41 (EDDEMNEVPYTESEEQQEEIPQTQKNER) are disordered.

This sequence belongs to the SepF family. In terms of assembly, homodimer. Interacts with FtsZ.

It localises to the cytoplasm. Functionally, cell division protein that is part of the divisome complex and is recruited early to the Z-ring. Probably stimulates Z-ring formation, perhaps through the cross-linking of FtsZ protofilaments. Its function overlaps with FtsA. The sequence is that of Cell division protein SepF from Lactobacillus johnsonii (strain CNCM I-12250 / La1 / NCC 533).